The sequence spans 219 residues: Thiopurine S-methyltransferase (219 aa).

S-adenosyl-L-methionine is bound by residues tryptophan 10, leucine 45, glutamate 66, and arginine 123.

Belongs to the class I-like SAM-binding methyltransferase superfamily. TPMT family.

It localises to the cytoplasm. The catalysed reaction is S-adenosyl-L-methionine + a thiopurine = S-adenosyl-L-homocysteine + a thiopurine S-methylether.. This chain is Thiopurine S-methyltransferase, found in Shewanella frigidimarina (strain NCIMB 400).